The sequence spans 1247 residues: E3 ubiquitin-protein ligase hecw-1 (1247 aa).

Residues 602-635 (TPPESHWKTYLDAKKRKFYVNHVTKETRWTKPDT) enclose the WW 1 domain. Positions 633 to 659 (PDTLNNNHIEPETPVHKRLSDRSASPR) are disordered. Basic and acidic residues predominate over residues 641–653 (IEPETPVHKRLSD). Residues 745–777 (QPLPSGWECITMNNRTVFLNHANKETSFYDPRI) enclose the WW 2 domain. The region spanning 914-1247 (DPFVLKKSRL…IVNGMSYSIE (334 aa)) is the HECT domain. Cys1215 (glycyl thioester intermediate) is an active-site residue.

As to expression, expressed in the nervous system throughout the body. In the anterior ganglion, expression is limited to the two lateral outer labial neurons OLLL and OLLR.

It localises to the cytoplasm. The catalysed reaction is S-ubiquitinyl-[E2 ubiquitin-conjugating enzyme]-L-cysteine + [acceptor protein]-L-lysine = [E2 ubiquitin-conjugating enzyme]-L-cysteine + N(6)-ubiquitinyl-[acceptor protein]-L-lysine.. The protein operates within protein modification; protein ubiquitination. E3 ubiquitin-protein ligase. Functions in the OLL neurons in the anterior ganglion to inhibit avoidance to microbial pathogens such as P.aeruginosa although worms do display avoidance behavior, vacating a P.aeruginosa lawn within 24 hours. Likely to act by inhibiting the neuropeptide receptor npr-1. This chain is E3 ubiquitin-protein ligase hecw-1, found in Caenorhabditis elegans.